Here is a 506-residue protein sequence, read N- to C-terminus: Maturase K (506 aa).

This sequence belongs to the intron maturase 2 family. MatK subfamily.

The protein resides in the plastid. Its subcellular location is the chloroplast. Usually encoded in the trnK tRNA gene intron. Probably assists in splicing its own and other chloroplast group II introns. This chain is Maturase K, found in Cytisus scoparius (Scotch broom).